The primary structure comprises 295 residues: Glycine--tRNA ligase alpha subunit (295 aa).

This sequence belongs to the class-II aminoacyl-tRNA synthetase family. Tetramer of two alpha and two beta subunits.

The protein localises to the cytoplasm. It carries out the reaction tRNA(Gly) + glycine + ATP = glycyl-tRNA(Gly) + AMP + diphosphate. This Bacillus licheniformis (strain ATCC 14580 / DSM 13 / JCM 2505 / CCUG 7422 / NBRC 12200 / NCIMB 9375 / NCTC 10341 / NRRL NRS-1264 / Gibson 46) protein is Glycine--tRNA ligase alpha subunit.